We begin with the raw amino-acid sequence, 236 residues long: Phosphoribosylaminoimidazole-succinocarboxamide synthase (236 aa).

Belongs to the SAICAR synthetase family.

It catalyses the reaction 5-amino-1-(5-phospho-D-ribosyl)imidazole-4-carboxylate + L-aspartate + ATP = (2S)-2-[5-amino-1-(5-phospho-beta-D-ribosyl)imidazole-4-carboxamido]succinate + ADP + phosphate + 2 H(+). It participates in purine metabolism; IMP biosynthesis via de novo pathway; 5-amino-1-(5-phospho-D-ribosyl)imidazole-4-carboxamide from 5-amino-1-(5-phospho-D-ribosyl)imidazole-4-carboxylate: step 1/2. This is Phosphoribosylaminoimidazole-succinocarboxamide synthase from Pseudomonas entomophila (strain L48).